The sequence spans 348 residues: Putative S-adenosyl-L-methionine-dependent methyltransferase MRA_3439 (348 aa).

S-adenosyl-L-methionine-binding positions include aspartate 171 and 200–201; that span reads DL.

Belongs to the UPF0677 family.

Exhibits S-adenosyl-L-methionine-dependent methyltransferase activity. The sequence is that of Putative S-adenosyl-L-methionine-dependent methyltransferase MRA_3439 from Mycobacterium tuberculosis (strain ATCC 25177 / H37Ra).